The sequence spans 209 residues: Protein-L-isoaspartate O-methyltransferase (209 aa).

The active site involves S55.

This sequence belongs to the methyltransferase superfamily. L-isoaspartyl/D-aspartyl protein methyltransferase family.

Its subcellular location is the cytoplasm. The catalysed reaction is [protein]-L-isoaspartate + S-adenosyl-L-methionine = [protein]-L-isoaspartate alpha-methyl ester + S-adenosyl-L-homocysteine. Catalyzes the methyl esterification of L-isoaspartyl residues in peptides and proteins that result from spontaneous decomposition of normal L-aspartyl and L-asparaginyl residues. It plays a role in the repair and/or degradation of damaged proteins. The sequence is that of Protein-L-isoaspartate O-methyltransferase from Anaeromyxobacter dehalogenans (strain 2CP-1 / ATCC BAA-258).